We begin with the raw amino-acid sequence, 90 residues long: Probable Fe(2+)-trafficking protein (90 aa).

The protein belongs to the Fe(2+)-trafficking protein family.

In terms of biological role, could be a mediator in iron transactions between iron acquisition and iron-requiring processes, such as synthesis and/or repair of Fe-S clusters in biosynthetic enzymes. The polypeptide is Probable Fe(2+)-trafficking protein (Pseudomonas fluorescens (strain ATCC BAA-477 / NRRL B-23932 / Pf-5)).